A 367-amino-acid polypeptide reads, in one-letter code: Mitogen-activated protein kinase 12 (367 aa).

The Protein kinase domain occupies 27-311 (YQDLQPVGSG…AAEALAHPYF (285 aa)). ATP-binding positions include 33-41 (VGSGAYGAV) and K56. Residue D153 is the Proton acceptor of the active site. A Phosphothreonine; by MAP2K3 and MAP2K6 modification is found at T183. The TXY motif lies at 183 to 185 (TGY). Phosphotyrosine; by MAP2K3 and MAP2K6 is present on Y185.

It belongs to the protein kinase superfamily. CMGC Ser/Thr protein kinase family. MAP kinase subfamily. In terms of assembly, monomer. Interacts with the PDZ domain of the syntrophin SNTA1. Interacts with LIN7C, SCRIB, SYNJ2BP and SH3BP5. Interacts with PTPN4; this interaction induces the activation of PTPN4 phosphatase activity. Requires Mg(2+) as cofactor. Post-translationally, dually phosphorylated on Thr-183 and Tyr-185 by MAP2K3/MKK3 and MAP2K6/MKK6, which activates the enzyme. In terms of processing, ubiquitinated. Ubiquitination leads to degradation by the proteasome pathway. Highly expressed in skeletal muscle, lung and testes and also in the heart and thymus of both adult and neonatal rats.

The protein resides in the cytoplasm. Its subcellular location is the nucleus. It is found in the mitochondrion. The enzyme catalyses L-seryl-[protein] + ATP = O-phospho-L-seryl-[protein] + ADP + H(+). It carries out the reaction L-threonyl-[protein] + ATP = O-phospho-L-threonyl-[protein] + ADP + H(+). With respect to regulation, activated by phosphorylation on threonine and tyrosine. MAP2K3/MKK3 and MAP2K6/MKK6 are both essential for the activation of MAPK12 induced by environmental stress, whereas MAP2K6/MKK6 is the major MAPK12 activator in response to TNF-alpha. In terms of biological role, serine/threonine kinase which acts as an essential component of the MAP kinase signal transduction pathway. MAPK12 is one of the four p38 MAPKs which play an important role in the cascades of cellular responses evoked by extracellular stimuli such as pro-inflammatory cytokines or physical stress leading to direct activation of transcription factors such as ELK1 and ATF2. Accordingly, p38 MAPKs phosphorylate a broad range of proteins and it has been estimated that they may have approximately 200 to 300 substrates each. Some of the targets are downstream kinases such as MAPKAPK2, which are activated through phosphorylation and further phosphorylate additional targets. Plays a role in myoblast differentiation and also in the down-regulation of cyclin D1 in response to hypoxia in adrenal cells suggesting MAPK12 may inhibit cell proliferation while promoting differentiation. Phosphorylates DLG1. Following osmotic shock, MAPK12 in the cell nucleus increases its association with nuclear DLG1, thereby causing dissociation of DLG1-SFPQ complexes. This function is independent of its catalytic activity and could affect mRNA processing and/or gene transcription to aid cell adaptation to osmolarity changes in the environment. Regulates UV-induced checkpoint signaling and repair of UV-induced DNA damage and G2 arrest after gamma-radiation exposure. MAPK12 is involved in the regulation of SLC2A1 expression and basal glucose uptake in L6 myotubes; and negatively regulates SLC2A4 expression and contraction-mediated glucose uptake in adult skeletal muscle. C-Jun (JUN) phosphorylation is stimulated by MAPK14 and inhibited by MAPK12, leading to a distinct AP-1 regulation. MAPK12 is required for the normal kinetochore localization of PLK1, prevents chromosomal instability and supports mitotic cell viability. MAPK12-signaling is also positively regulating the expansion of transient amplifying myogenic precursor cells during muscle growth and regeneration. This Rattus norvegicus (Rat) protein is Mitogen-activated protein kinase 12 (Mapk12).